The primary structure comprises 362 residues: NAD(P)H-quinone oxidoreductase subunit 1, chloroplastic (362 aa).

A run of 8 helical transmembrane segments spans residues 27–47 (IWILPILTLLLGITIEVLVIV), 94–114 (IPLFSIGPSIAVISILLSFLV), 128–148 (IGVFLWIAISSIAPIGLLMAG), 164–184 (AAQSISYEIPLTFCVLAISLL), 202–222 (FFGWNLWRQPIGFLVFLISSL), 247–267 (YSGIKYGLFYLVSYLNLLVSS), 303–323 (TMSIFITLTKAYLFLFISITI), and 335–355 (LLNLGWKFLLPISLGNLLLTT).

Belongs to the complex I subunit 1 family. As to quaternary structure, NDH is composed of at least 16 different subunits, 5 of which are encoded in the nucleus.

It localises to the plastid. The protein localises to the chloroplast thylakoid membrane. It catalyses the reaction a plastoquinone + NADH + (n+1) H(+)(in) = a plastoquinol + NAD(+) + n H(+)(out). It carries out the reaction a plastoquinone + NADPH + (n+1) H(+)(in) = a plastoquinol + NADP(+) + n H(+)(out). Functionally, NDH shuttles electrons from NAD(P)H:plastoquinone, via FMN and iron-sulfur (Fe-S) centers, to quinones in the photosynthetic chain and possibly in a chloroplast respiratory chain. The immediate electron acceptor for the enzyme in this species is believed to be plastoquinone. Couples the redox reaction to proton translocation, and thus conserves the redox energy in a proton gradient. The polypeptide is NAD(P)H-quinone oxidoreductase subunit 1, chloroplastic (ndhA) (Oryza sativa (Rice)).